A 235-amino-acid polypeptide reads, in one-letter code: Chaperone protein TorD (235 aa).

It belongs to the TorD/DmsD family. TorD subfamily.

It localises to the cytoplasm. Involved in the biogenesis of TorA. Acts on TorA before the insertion of the molybdenum cofactor and, as a result, probably favors a conformation of the apoenzyme that is competent for acquiring the cofactor. This chain is Chaperone protein TorD, found in Shewanella amazonensis (strain ATCC BAA-1098 / SB2B).